Consider the following 133-residue polypeptide: MGDKWIGVALSDPLRILASPLVILRRDDDAKTVENIEALVKTHQPDLLVIGLPVSLNGTIGPQAEKVKAFSGLLSQSLNTEIIFRDERFSTDEARRKMNDSGKNNKTVRDDAAAAAVILQDYLDETNPPCFQP.

Belongs to the YqgF nuclease family.

The protein localises to the cytoplasm. Functionally, could be a nuclease involved in processing of the 5'-end of pre-16S rRNA. In Dehalococcoides mccartyi (strain ATCC BAA-2266 / KCTC 15142 / 195) (Dehalococcoides ethenogenes (strain 195)), this protein is Putative pre-16S rRNA nuclease.